A 201-amino-acid chain; its full sequence is Large ribosomal subunit protein uL4 (201 aa).

Residues 45-66 are disordered; sequence AQKSRAEVVGSNKKPWRQKGTG.

This sequence belongs to the universal ribosomal protein uL4 family. In terms of assembly, part of the 50S ribosomal subunit.

In terms of biological role, one of the primary rRNA binding proteins, this protein initially binds near the 5'-end of the 23S rRNA. It is important during the early stages of 50S assembly. It makes multiple contacts with different domains of the 23S rRNA in the assembled 50S subunit and ribosome. Its function is as follows. Forms part of the polypeptide exit tunnel. The polypeptide is Large ribosomal subunit protein uL4 (Baumannia cicadellinicola subsp. Homalodisca coagulata).